Consider the following 372-residue polypeptide: Glutamate 5-kinase (372 aa).

ATP is bound at residue Lys14. Substrate is bound by residues Ser54, Asp141, and Asn153. 173-174 contacts ATP; the sequence is TD. A PUA domain is found at 280–358; sequence RGHVVIDDGA…GEIESVLGYM (79 aa).

It belongs to the glutamate 5-kinase family.

It is found in the cytoplasm. The catalysed reaction is L-glutamate + ATP = L-glutamyl 5-phosphate + ADP. Its pathway is amino-acid biosynthesis; L-proline biosynthesis; L-glutamate 5-semialdehyde from L-glutamate: step 1/2. In terms of biological role, catalyzes the transfer of a phosphate group to glutamate to form L-glutamate 5-phosphate. This Paraburkholderia xenovorans (strain LB400) protein is Glutamate 5-kinase.